The sequence spans 375 residues: Actin (375 aa).

This sequence belongs to the actin family.

It is found in the cytoplasm. The protein resides in the cytoskeleton. It carries out the reaction ATP + H2O = ADP + phosphate + H(+). Functionally, actins are highly conserved proteins that are involved in various types of cell motility and are ubiquitously expressed in all eukaryotic cells. This chain is Actin, found in Sterkiella cavicola (Ciliate).